A 376-amino-acid chain; its full sequence is Penicillin V acylase (376 aa).

The N-terminal stretch at 1 to 29 (MIKNNKRIKSTVCALSLVALTLGSAVSLA) is a signal peptide. The Nucleophile role is filled by cysteine 30.

The protein belongs to the peptidase C59 family. Homotetramer. Dimer of dimers.

It is found in the periplasm. It carries out the reaction a penicillin + H2O = 6-aminopenicillanate + a carboxylate. Exhibits uncharacteristic kinetic behavior, showing positive cooperativity coupled with substrate inhibition. Penicillin acylase activity is enhanced in the presence of the reducing agent DTT, indicating active sulfhydryl group in the enzyme. Also shows enhanced activity in presence of organic solvents and detergents. Inhibited largely in presence of Ag(+), Hg(2+) and Cd(2+) ions, which have strong affinities for sulfhydryl groups. Activity is also inhibited by bile salts. In terms of biological role, catalyzes the hydrolysis of penicillin V to 6-aminopenicillanate (6-APA). Shows high specificity towards penicillin V. Can use other beta-lactam substrates, including penicillin G, ampicillin, cephalexin, cloxacillin and dicloxacillin, but at a rate less than 10% of that of penicillin V. Does not show any activity with glyco- or tauro-conjugated bile salts. This chain is Penicillin V acylase, found in Pectobacterium atrosepticum (strain SCRI 1043 / ATCC BAA-672) (Erwinia carotovora subsp. atroseptica).